We begin with the raw amino-acid sequence, 177 residues long: RNA pyrophosphohydrolase (177 aa).

Residues 6-149 (GYRPNVGIVI…KRDVYRRVMK (144 aa)) enclose the Nudix hydrolase domain. The short motif at 38 to 59 (GGINAGETAEQAMYRELFEEVG) is the Nudix box element.

This sequence belongs to the Nudix hydrolase family. RppH subfamily. A divalent metal cation is required as a cofactor.

Accelerates the degradation of transcripts by removing pyrophosphate from the 5'-end of triphosphorylated RNA, leading to a more labile monophosphorylated state that can stimulate subsequent ribonuclease cleavage. In Edwardsiella ictaluri (strain 93-146), this protein is RNA pyrophosphohydrolase.